Reading from the N-terminus, the 412-residue chain is Serine hydroxymethyltransferase (412 aa).

(6S)-5,6,7,8-tetrahydrofolate is bound by residues Leu-117 and 121–123 (GHL). Lys-226 is modified (N6-(pyridoxal phosphate)lysine).

The protein belongs to the SHMT family. Homodimer. Requires pyridoxal 5'-phosphate as cofactor.

It localises to the cytoplasm. The enzyme catalyses (6R)-5,10-methylene-5,6,7,8-tetrahydrofolate + glycine + H2O = (6S)-5,6,7,8-tetrahydrofolate + L-serine. It participates in one-carbon metabolism; tetrahydrofolate interconversion. Its pathway is amino-acid biosynthesis; glycine biosynthesis; glycine from L-serine: step 1/1. Functionally, catalyzes the reversible interconversion of serine and glycine with tetrahydrofolate (THF) serving as the one-carbon carrier. This reaction serves as the major source of one-carbon groups required for the biosynthesis of purines, thymidylate, methionine, and other important biomolecules. Also exhibits THF-independent aldolase activity toward beta-hydroxyamino acids, producing glycine and aldehydes, via a retro-aldol mechanism. This is Serine hydroxymethyltransferase from Staphylococcus saprophyticus subsp. saprophyticus (strain ATCC 15305 / DSM 20229 / NCIMB 8711 / NCTC 7292 / S-41).